A 559-amino-acid chain; its full sequence is Asparagine--tRNA ligase, cytoplasmic (559 aa).

Phosphoserine is present on S72. 2 positions are modified to N6-acetyllysine: K255 and K501.

This sequence belongs to the class-II aminoacyl-tRNA synthetase family.

It localises to the cytoplasm. The catalysed reaction is tRNA(Asn) + L-asparagine + ATP = L-asparaginyl-tRNA(Asn) + AMP + diphosphate + H(+). This chain is Asparagine--tRNA ligase, cytoplasmic (NARS), found in Bos taurus (Bovine).